Consider the following 20-residue polypeptide: TPQIQKPAPQFSKTALLPDE.

The interval Thr-1–Glu-20 is disordered.

The protein is Unknown protein NF015 from 2D-PAGE of Naegleria fowleri (Brain eating amoeba).